Here is a 447-residue protein sequence, read N- to C-terminus: Phospholipase A(1) LCAT3 (447 aa).

S177 acts as the Acyl-ester intermediate in catalysis. Catalysis depends on charge relay system residues D384 and H409.

The protein belongs to the AB hydrolase superfamily. Lipase family.

Its subcellular location is the microsome membrane. The enzyme catalyses a 1,2-diacyl-sn-glycero-3-phosphocholine + H2O = a 2-acyl-sn-glycero-3-phosphocholine + a fatty acid + H(+). In terms of biological role, hydrolyzes the sn-1 acylester bond of phospholipids. Phosphatidylcholine, phosphatidylethanolamine and phosphatidic acid can be used as substrates. Weak activity with lysophosphatidylcholine and no activity with tripalmitoylglycerol and cholesteryl oleate. Seems to have a preference for unsaturated fatty acids at the sn-1 position. This chain is Phospholipase A(1) LCAT3 (LCAT3), found in Arabidopsis thaliana (Mouse-ear cress).